The following is a 477-amino-acid chain: Delayed-rectifier potassium channel regulatory subunit KCNS2 (477 aa).

At M1–V184 the chain is on the cytoplasmic side. Residues L185–L206 form a helical membrane-spanning segment. The Extracellular segment spans residues N207–P225. A helical transmembrane segment spans residues R226–V248. Residues A249–A259 are Cytoplasmic-facing. Residues L260–V280 traverse the membrane as a helical segment. Over V281–L290 the chain is Extracellular. Residues G291–H311 traverse the membrane as a helical; Voltage-sensor segment. The Cytoplasmic segment spans residues S312–Y326. The helical transmembrane segment at K327 to Y348 threads the bilayer. Topologically, residues T349–I361 are extracellular. Positions P362–T373 form an intramembrane region, helical. The short motif at T374–D379 is the Selectivity filter element. The stretch at T374 to V381 is an intramembrane region. The Extracellular segment spans residues P382–K388. The chain crosses the membrane as a helical span at residues L389 to Y417. Residues R418–H477 lie on the Cytoplasmic side of the membrane.

It belongs to the potassium channel family. S (TC 1.A.1.2) subfamily. Kv9.2/KCNS2 sub-subfamily. In terms of assembly, heterotetramer with KCNB1 and KCNB2. Does not form homomultimers. As to expression, detected in brain, lung and in pulmonary arteries.

It is found in the cell membrane. Functionally, potassium channel regulatory subunit that modulate the delayed rectifier voltage-gated potassium channel activity of KCNB1 and KCNB2 by altering their kinetics, expression levels, and shifting the half-inactivation potential to more polarized values. While it does not form functional channels on its own, it can form functional heterotetrameric channels with KCNB1 and KCNB2. Each regulatory subunit has unique regulatory properties that can lead to extensive inhibition, significant changes in kinetics, and/or substantial shifts in the voltage dependencies of the inactivation process. This chain is Delayed-rectifier potassium channel regulatory subunit KCNS2, found in Rattus norvegicus (Rat).